A 125-amino-acid chain; its full sequence is Small ribosomal subunit protein uS13 (125 aa).

The tract at residues 92–125 (RRSLPARGQRTRTNARTRKGKRKTVAGKKKAGKK) is disordered.

This sequence belongs to the universal ribosomal protein uS13 family. As to quaternary structure, part of the 30S ribosomal subunit. Forms a loose heterodimer with protein S19. Forms two bridges to the 50S subunit in the 70S ribosome.

In terms of biological role, located at the top of the head of the 30S subunit, it contacts several helices of the 16S rRNA. In the 70S ribosome it contacts the 23S rRNA (bridge B1a) and protein L5 of the 50S subunit (bridge B1b), connecting the 2 subunits; these bridges are implicated in subunit movement. Contacts the tRNAs in the A and P-sites. This Chlorobaculum parvum (strain DSM 263 / NCIMB 8327) (Chlorobium vibrioforme subsp. thiosulfatophilum) protein is Small ribosomal subunit protein uS13.